Reading from the N-terminus, the 105-residue chain is Small ribosomal subunit protein eS24 (105 aa).

The protein belongs to the eukaryotic ribosomal protein eS24 family.

This Haloquadratum walsbyi (strain DSM 16790 / HBSQ001) protein is Small ribosomal subunit protein eS24.